Consider the following 352-residue polypeptide: MGLKIVDGSIVHDNLTSSSPPSVTNSSPLLNTKRRNSITSLSDYKKNKDTLNNSNNNINQPFENSNNFNNNSKEIKNENKIKNFFQHLFSILLLKNPTMIQIIETLELSTNIYNIQFKLKYLLAICVSSQIIFKSSGLLITLLVLYLGTFFNKISINNKDKNKNNNTIDYSLKNNNIDTSLIKDINNSVISNNSSNSNNNNINNSNNNNNNNNRILSPNQLSKSSNVEYNKCKCKSPTTSSNNYLSSSQSRVQTLSSPNISPCNICVSPNLLYNSLSSLSSSLPINSCNYSMSEQEGDEFESNFDFEDSQYEESDEEDNSSPAFHLYSSPNLRVACNKISTFSPNGRKLGTN.

Residues N14, N52, and N70 are each glycosylated (N-linked (GlcNAc...) asparagine). A disordered region spans residues 41–73; that stretch reads LSDYKKNKDTLNNSNNNINQPFENSNNFNNNSK. The span at 50 to 72 shows a compositional bias: low complexity; that stretch reads TLNNSNNNINQPFENSNNFNNNS. A helical membrane pass occupies residues 131 to 151; sequence IIFKSSGLLITLLVLYLGTFF. N165, N186, N192, N193, N203, and N289 each carry an N-linked (GlcNAc...) asparagine glycan. Positions 193–213 are enriched in low complexity; the sequence is NSSNSNNNNINNSNNNNNNNN. A disordered region spans residues 193–219; the sequence is NSSNSNNNNINNSNNNNNNNNRILSPN.

The protein resides in the membrane. This is an uncharacterized protein from Dictyostelium discoideum (Social amoeba).